The chain runs to 382 residues: uncharacterized protein (382 aa).

Residues Met-1 to Ile-21 form a helical membrane-spanning segment.

Belongs to the membrane fusion protein (MFP) (TC 8.A.1) family.

It localises to the membrane. This is an uncharacterized protein from Haemophilus influenzae (strain ATCC 51907 / DSM 11121 / KW20 / Rd).